The primary structure comprises 196 residues: Molybdenum cofactor guanylyltransferase (196 aa).

GTP-binding positions include 10–12 (LAG), Lys-23, Asn-51, Asp-69, and Asp-99. Asp-99 lines the Mg(2+) pocket.

It belongs to the MobA family. As to quaternary structure, monomer. It depends on Mg(2+) as a cofactor.

Its subcellular location is the cytoplasm. It carries out the reaction Mo-molybdopterin + GTP + H(+) = Mo-molybdopterin guanine dinucleotide + diphosphate. Transfers a GMP moiety from GTP to Mo-molybdopterin (Mo-MPT) cofactor (Moco or molybdenum cofactor) to form Mo-molybdopterin guanine dinucleotide (Mo-MGD) cofactor. The protein is Molybdenum cofactor guanylyltransferase of Shewanella woodyi (strain ATCC 51908 / MS32).